Here is a 214-residue protein sequence, read N- to C-terminus: Sugar transporter SWEET1 (214 aa).

A run of 7 helical transmembrane segments spans residues 3-23, 38-58, 65-85, 93-113, 125-145, 157-177, and 181-201; these read WMWL…SSGL, IQFL…YYGY, LIIV…AYIL, VVSQ…YFTL, LGLF…ADLA, SFPL…YGWV, and LYIT…FWLF. In terms of domain architecture, MtN3/slv 1 spans 6 to 89; the sequence is LLSGACIVFT…MAAYILYSLE (84 aa). Residues 124–207 enclose the MtN3/slv 2 domain; that stretch reads QLGLFCSIFT…FWLFSRYPPD (84 aa).

It belongs to the SWEET sugar transporter family.

It localises to the golgi apparatus membrane. Its subcellular location is the cell membrane. Its function is as follows. Mediates sugar transport across membranes. This chain is Sugar transporter SWEET1 (slc50a1), found in Xenopus tropicalis (Western clawed frog).